We begin with the raw amino-acid sequence, 134 residues long: MKKIASYYLMTLGLSSLTFGLLLGFYSFVMYGDMIIALFTAAIALLYGFVVYGLFAVPLQMKLQKKARTFNVMYLLIYSVVAFIAAFLFFVINEPASIAWTLQSYFYYMLSIAAAVIYWLWDSLILYKRTASGV.

The next 4 helical transmembrane spans lie at 9–29 (LMTL…YSFV), 35–55 (IIAL…YGLF), 72–92 (VMYL…FFVI), and 106–126 (FYYM…SLIL).

The protein belongs to the UPF0715 family.

The protein localises to the cell membrane. This is UPF0715 membrane protein YoaG (yoaG) from Bacillus subtilis (strain 168).